The sequence spans 101 residues: Small ribosomal subunit protein uS14A (101 aa).

The disordered stretch occupies residues 31 to 69 (IAAPGSSPEERAAAQQELRRQPRDASATRLRNRDAVDGR). Positions 38–53 (PEERAAAQQELRRQPR) are enriched in basic and acidic residues.

Belongs to the universal ribosomal protein uS14 family. In terms of assembly, part of the 30S ribosomal subunit. Contacts proteins S3 and S10.

Functionally, binds 16S rRNA, required for the assembly of 30S particles and may also be responsible for determining the conformation of the 16S rRNA at the A site. This Saccharopolyspora erythraea (strain ATCC 11635 / DSM 40517 / JCM 4748 / NBRC 13426 / NCIMB 8594 / NRRL 2338) protein is Small ribosomal subunit protein uS14A.